Consider the following 225-residue polypeptide: Chalcone--flavanone isomerase 3 (225 aa).

Substrate-binding residues include Thr51, Asn116, and Thr193.

The protein belongs to the chalcone isomerase family.

It carries out the reaction a chalcone = a flavanone.. Its pathway is secondary metabolite biosynthesis; flavonoid biosynthesis. Catalyzes the intramolecular cyclization of bicyclic chalcones into tricyclic (S)-flavanones. Responsible for the isomerization of 4,2',4',6'-tetrahydroxychalcone (also termed chalcone) into naringenin. This Lotus japonicus (Lotus corniculatus var. japonicus) protein is Chalcone--flavanone isomerase 3 (CHI3).